The primary structure comprises 405 residues: Squamosa promoter-binding-like protein 6 (405 aa).

Residues 121 to 198 (NPLCQVYGCS…AGHNERRRKP (78 aa)) form an SBP-type zinc finger. Zn(2+) is bound by residues Cys124, Cys129, Cys146, His149, Cys165, Cys168, His172, and Cys184. The Bipartite nuclear localization signal signature appears at 181–197 (KRSCRRRLAGHNERRRK).

Requires Zn(2+) as cofactor.

The protein localises to the nucleus. Functionally, trans-acting factor that binds specifically to the consensus nucleotide sequence 5'-TNCGTACAA-3'. This Arabidopsis thaliana (Mouse-ear cress) protein is Squamosa promoter-binding-like protein 6 (SPL6).